Reading from the N-terminus, the 270-residue chain is Putative carbamate hydrolase RutD (270 aa).

This sequence belongs to the AB hydrolase superfamily. Hydrolase RutD family.

The catalysed reaction is carbamate + 2 H(+) = NH4(+) + CO2. In terms of biological role, involved in pyrimidine catabolism. May facilitate the hydrolysis of carbamate, a reaction that can also occur spontaneously. In Escherichia coli O44:H18 (strain 042 / EAEC), this protein is Putative carbamate hydrolase RutD.